The following is a 152-amino-acid chain: Superoxide dismutase [Cu-Zn] 1 (152 aa).

The Cu cation site is built by H45, H47, and H62. The cysteines at positions 56 and 145 are disulfide-linked. Zn(2+) contacts are provided by H62, H70, H79, and D82. Residue H119 participates in Cu cation binding.

It belongs to the Cu-Zn superoxide dismutase family. As to quaternary structure, homodimer. Interacts with DJ1A and CCS. The cofactor is Cu cation. Zn(2+) serves as cofactor. Expressed in leaves (at protein level). The spatial localization is regulated by miR398-mediated silencing. Mostly present in flowers, old rosette leaves and inflorescence, and, to a lower extent, in cauline leaves, stems and roots.

Its subcellular location is the cytoplasm. It localises to the cytosol. The protein localises to the nucleus. The enzyme catalyses 2 superoxide + 2 H(+) = H2O2 + O2. Functionally, destroys radicals which are normally produced within the cells and which are toxic to biological systems. The sequence is that of Superoxide dismutase [Cu-Zn] 1 (CSD1) from Arabidopsis thaliana (Mouse-ear cress).